Here is a 289-residue protein sequence, read N- to C-terminus: Acetyl-coenzyme A carboxylase carboxyl transferase subunit beta (289 aa).

Residues 27-289 (LWSKCPSCES…SFMRVPAGAA (263 aa)) enclose the CoA carboxyltransferase N-terminal domain. Residues C31, C34, C50, and C53 each coordinate Zn(2+). The C4-type zinc finger occupies 31-53 (CPSCESVLYRTDLESNSEVCPKC).

This sequence belongs to the AccD/PCCB family. In terms of assembly, acetyl-CoA carboxylase is a heterohexamer composed of biotin carboxyl carrier protein (AccB), biotin carboxylase (AccC) and two subunits each of ACCase subunit alpha (AccA) and ACCase subunit beta (AccD). Zn(2+) is required as a cofactor.

It is found in the cytoplasm. It carries out the reaction N(6)-carboxybiotinyl-L-lysyl-[protein] + acetyl-CoA = N(6)-biotinyl-L-lysyl-[protein] + malonyl-CoA. The protein operates within lipid metabolism; malonyl-CoA biosynthesis; malonyl-CoA from acetyl-CoA: step 1/1. Functionally, component of the acetyl coenzyme A carboxylase (ACC) complex. Biotin carboxylase (BC) catalyzes the carboxylation of biotin on its carrier protein (BCCP) and then the CO(2) group is transferred by the transcarboxylase to acetyl-CoA to form malonyl-CoA. The chain is Acetyl-coenzyme A carboxylase carboxyl transferase subunit beta from Methylobacillus flagellatus (strain ATCC 51484 / DSM 6875 / VKM B-1610 / KT).